Consider the following 205-residue polypeptide: Protein GrpE (205 aa).

Positions 1–18 (MSEEVKNSVETEENKASK) are enriched in basic and acidic residues. Residues 1 to 60 (MSEEVKNSVETEENKASKDNATQAPNPTENHNTAQETEKAENSEKTESATQENESLDKLK) form a disordered region. Residues 19–35 (DNATQAPNPTENHNTAQ) show a composition bias toward polar residues. The span at 36–47 (ETEKAENSEKTE) shows a compositional bias: basic and acidic residues.

Belongs to the GrpE family. Homodimer.

Its subcellular location is the cytoplasm. In terms of biological role, participates actively in the response to hyperosmotic and heat shock by preventing the aggregation of stress-denatured proteins, in association with DnaK and GrpE. It is the nucleotide exchange factor for DnaK and may function as a thermosensor. Unfolded proteins bind initially to DnaJ; upon interaction with the DnaJ-bound protein, DnaK hydrolyzes its bound ATP, resulting in the formation of a stable complex. GrpE releases ADP from DnaK; ATP binding to DnaK triggers the release of the substrate protein, thus completing the reaction cycle. Several rounds of ATP-dependent interactions between DnaJ, DnaK and GrpE are required for fully efficient folding. The protein is Protein GrpE of Chloroherpeton thalassium (strain ATCC 35110 / GB-78).